A 90-amino-acid polypeptide reads, in one-letter code: RNA-binding protein Hfq (90 aa).

In terms of domain architecture, Sm spans 9 to 68 (EPFLNTLRKEKVPVSIYLVNGIKLQGQIESFDQFVVLLRNNVNQMVYKHAISTIVPARRV).

Belongs to the Hfq family. In terms of assembly, homohexamer.

RNA chaperone that binds small regulatory RNA (sRNAs) and mRNAs to facilitate mRNA translational regulation in response to envelope stress, environmental stress and changes in metabolite concentrations. Also binds with high specificity to tRNAs. This is RNA-binding protein Hfq from Halorhodospira halophila (strain DSM 244 / SL1) (Ectothiorhodospira halophila (strain DSM 244 / SL1)).